Here is a 263-residue protein sequence, read N- to C-terminus: Putative hydro-lyase Psyc_1103 (263 aa).

This sequence belongs to the D-glutamate cyclase family.

The chain is Putative hydro-lyase Psyc_1103 from Psychrobacter arcticus (strain DSM 17307 / VKM B-2377 / 273-4).